The following is a 170-amino-acid chain: RNA pyrophosphohydrolase (170 aa).

Residues 6–150 form the Nudix hydrolase domain; that stretch reads GFRPNVGIIL…KRDVYRRALR (145 aa). Residues 39–60 carry the Nudix box motif; sequence GGINAHESPEQALYRELHEEVG.

It belongs to the Nudix hydrolase family. RppH subfamily. A divalent metal cation is required as a cofactor.

Accelerates the degradation of transcripts by removing pyrophosphate from the 5'-end of triphosphorylated RNA, leading to a more labile monophosphorylated state that can stimulate subsequent ribonuclease cleavage. The polypeptide is RNA pyrophosphohydrolase (Cellvibrio japonicus (strain Ueda107) (Pseudomonas fluorescens subsp. cellulosa)).